We begin with the raw amino-acid sequence, 169 residues long: Non-specific lipid transfer protein GPI-anchored 11 (169 aa).

The first 23 residues, 1 to 23 (MAYATILMIFSVVALMSGERAHA), serve as a signal peptide directing secretion. 4 disulfide bridges follow: cysteine 27–cysteine 70, cysteine 37–cysteine 54, cysteine 55–cysteine 95, and cysteine 68–cysteine 105. Serine 146 is lipidated: GPI-anchor amidated serine. Residues 147 to 169 (SDASLLSVSFAFVIFMALISSFY) constitute a propeptide, removed in mature form.

It belongs to the plant LTP family. As to expression, expressed in a vascular-specific manner, mainly in roots, and, to a lower extent, in hypocotyls, seedlings stems and flowers.

Its subcellular location is the cell membrane. The protein localises to the secreted. Its function is as follows. Probable lipid transfer protein. Proteoglycan-like factor that exhibits xylogen activity consisting in mediating local and inductive cell-cell interactions required for xylem differentiation. This Arabidopsis thaliana (Mouse-ear cress) protein is Non-specific lipid transfer protein GPI-anchored 11.